The sequence spans 257 residues: MSVPLILTLLAGAATFIGAFLGVLGQKPSNRVLAFSLGFAAGIMLLISLMEMLPAALDTEGMSPVLGYGMFIIGLLGYFGLDRLLPHAHPQDLVPKRQQPIPGSIKRTAVLLTLGISLHNFPEGIATFVTASSNLELGFGIALAVALHNIPEGLAVAGPVYAATGSKRTAIFWAGISGMAEIFGGVLAWLILGSLVSPIVMAAIMAAVAGIMVALSVDELMPLAKEIDPNNNPSYGVLCGMSVMGLSLVILQTIGIG.

The next 3 membrane-spanning stretches (helical) occupy residues 5–25 (LILT…GVLG), 32–52 (VLAF…LMEM), and 61–81 (GMSP…YFGL). Fe(2+) is bound by residues Asn120 and Glu123. Residues Glu123 and His148 each contribute to the Zn(2+) site. Fe(2+) contacts are provided by Asn149, Glu152, and Glu181. Position 152 (Glu152) interacts with Zn(2+). 3 consecutive transmembrane segments (helical) span residues 182 to 202 (IFGG…IVMA), 203 to 223 (AIMA…LMPL), and 236 to 256 (GVLC…TIGI).

Belongs to the ZIP transporter (TC 2.A.5) family. ZupT subfamily.

Its subcellular location is the cell inner membrane. The catalysed reaction is Zn(2+)(in) = Zn(2+)(out). In terms of biological role, mediates zinc uptake. May also transport other divalent cations. This chain is Zinc transporter ZupT, found in Salmonella arizonae (strain ATCC BAA-731 / CDC346-86 / RSK2980).